Here is a 309-residue protein sequence, read N- to C-terminus: Porphobilinogen deaminase (309 aa).

An S-(dipyrrolylmethanemethyl)cysteine modification is found at Cys241.

The protein belongs to the HMBS family. As to quaternary structure, monomer. Requires dipyrromethane as cofactor.

It carries out the reaction 4 porphobilinogen + H2O = hydroxymethylbilane + 4 NH4(+). Its pathway is porphyrin-containing compound metabolism; protoporphyrin-IX biosynthesis; coproporphyrinogen-III from 5-aminolevulinate: step 2/4. In terms of biological role, tetrapolymerization of the monopyrrole PBG into the hydroxymethylbilane pre-uroporphyrinogen in several discrete steps. This Bacillus thuringiensis (strain Al Hakam) protein is Porphobilinogen deaminase.